A 380-amino-acid polypeptide reads, in one-letter code: Beta sliding clamp (380 aa).

Belongs to the beta sliding clamp family. In terms of assembly, forms a ring-shaped head-to-tail homodimer around DNA which binds and tethers DNA polymerases and other proteins to the DNA. The DNA replisome complex has a single clamp-loading complex (3 tau and 1 each of delta, delta', psi and chi subunits) which binds 3 Pol III cores (1 core on the leading strand and 2 on the lagging strand) each with a beta sliding clamp dimer. Additional proteins in the replisome are other copies of gamma, psi and chi, Ssb, DNA helicase and RNA primase.

It localises to the cytoplasm. Its function is as follows. Confers DNA tethering and processivity to DNA polymerases and other proteins. Acts as a clamp, forming a ring around DNA (a reaction catalyzed by the clamp-loading complex) which diffuses in an ATP-independent manner freely and bidirectionally along dsDNA. Initially characterized for its ability to contact the catalytic subunit of DNA polymerase III (Pol III), a complex, multichain enzyme responsible for most of the replicative synthesis in bacteria; Pol III exhibits 3'-5' exonuclease proofreading activity. The beta chain is required for initiation of replication as well as for processivity of DNA replication. The protein is Beta sliding clamp (dnaN) of Lactococcus lactis subsp. lactis (strain IL1403) (Streptococcus lactis).